The chain runs to 347 residues: N-acetyl-gamma-glutamyl-phosphate reductase (347 aa).

Residue cysteine 152 is part of the active site.

The protein belongs to the NAGSA dehydrogenase family. Type 1 subfamily.

The protein resides in the cytoplasm. It catalyses the reaction N-acetyl-L-glutamate 5-semialdehyde + phosphate + NADP(+) = N-acetyl-L-glutamyl 5-phosphate + NADPH + H(+). The protein operates within amino-acid biosynthesis; L-arginine biosynthesis; N(2)-acetyl-L-ornithine from L-glutamate: step 3/4. Catalyzes the NADPH-dependent reduction of N-acetyl-5-glutamyl phosphate to yield N-acetyl-L-glutamate 5-semialdehyde. This is N-acetyl-gamma-glutamyl-phosphate reductase from Neisseria meningitidis serogroup C (strain 053442).